The following is a 294-amino-acid chain: 3-methyl-2-oxobutanoate hydroxymethyltransferase (294 aa).

Residues 1–12 (MSASAESTNATP) are compositionally biased toward polar residues. The tract at residues 1–21 (MSASAESTNATPYGTLPPTAA) is disordered. Mg(2+) is bound by residues aspartate 69 and aspartate 112. 3-methyl-2-oxobutanoate is bound by residues 69-70 (DS), aspartate 112, and lysine 141. Position 143 (glutamate 143) interacts with Mg(2+). Glutamate 210 (proton acceptor) is an active-site residue.

This sequence belongs to the PanB family. Homodecamer; pentamer of dimers. The cofactor is Mg(2+).

The protein resides in the cytoplasm. The catalysed reaction is 3-methyl-2-oxobutanoate + (6R)-5,10-methylene-5,6,7,8-tetrahydrofolate + H2O = 2-dehydropantoate + (6S)-5,6,7,8-tetrahydrofolate. Its pathway is cofactor biosynthesis; (R)-pantothenate biosynthesis; (R)-pantoate from 3-methyl-2-oxobutanoate: step 1/2. Its function is as follows. Catalyzes the reversible reaction in which hydroxymethyl group from 5,10-methylenetetrahydrofolate is transferred onto alpha-ketoisovalerate to form ketopantoate. This chain is 3-methyl-2-oxobutanoate hydroxymethyltransferase, found in Albidiferax ferrireducens (strain ATCC BAA-621 / DSM 15236 / T118) (Rhodoferax ferrireducens).